The primary structure comprises 211 residues: MGQKCNPIGLRLKIINTWDSLWYANKDYTTKLHEDFLLRKFIKKAFYHAAISKVVIARKVDLIMVNVYSAKPGVIIGKKGADIDKVKQQIVKMINNNIELNIIEVKKPELKAVLIAENIAQQLEKRISFRRAMKRSVQNCLKIGAKGIKVSCAGRLGGAEIARTEWYKEGSVPLHTFRANIDYGFSEAKTIYGIIGVKVWVYLGETKSSNE.

Residues 38 to 106 (LRKFIKKAFY…NIELNIIEVK (69 aa)) enclose the KH type-2 domain.

It belongs to the universal ribosomal protein uS3 family. As to quaternary structure, part of the 30S ribosomal subunit. Forms a tight complex with proteins S10 and S14.

Its function is as follows. Binds the lower part of the 30S subunit head. Binds mRNA in the 70S ribosome, positioning it for translation. This is Small ribosomal subunit protein uS3 from Ehrlichia canis (strain Jake).